We begin with the raw amino-acid sequence, 668 residues long: Threonine--tRNA ligase (668 aa).

Positions 1–61 constitute a TGS domain; sequence MSDLKIALTH…ADGDQVEPVA (61 aa). The catalytic stretch occupies residues 265–564; it reads DHRKLGRDLD…LVEHYAGAFP (300 aa). Residues C358, H409, and H541 each coordinate Zn(2+).

The protein belongs to the class-II aminoacyl-tRNA synthetase family. Homodimer. It depends on Zn(2+) as a cofactor.

It localises to the cytoplasm. The enzyme catalyses tRNA(Thr) + L-threonine + ATP = L-threonyl-tRNA(Thr) + AMP + diphosphate + H(+). In terms of biological role, catalyzes the attachment of threonine to tRNA(Thr) in a two-step reaction: L-threonine is first activated by ATP to form Thr-AMP and then transferred to the acceptor end of tRNA(Thr). Also edits incorrectly charged L-seryl-tRNA(Thr). The protein is Threonine--tRNA ligase of Nocardioides sp. (strain ATCC BAA-499 / JS614).